The chain runs to 351 residues: UDP-3-O-acylglucosamine N-acyltransferase (351 aa).

The active-site Proton acceptor is His240.

The protein belongs to the transferase hexapeptide repeat family. LpxD subfamily. In terms of assembly, homotrimer.

The enzyme catalyses a UDP-3-O-[(3R)-3-hydroxyacyl]-alpha-D-glucosamine + a (3R)-hydroxyacyl-[ACP] = a UDP-2-N,3-O-bis[(3R)-3-hydroxyacyl]-alpha-D-glucosamine + holo-[ACP] + H(+). Its pathway is bacterial outer membrane biogenesis; LPS lipid A biosynthesis. Catalyzes the N-acylation of UDP-3-O-acylglucosamine using 3-hydroxyacyl-ACP as the acyl donor. Is involved in the biosynthesis of lipid A, a phosphorylated glycolipid that anchors the lipopolysaccharide to the outer membrane of the cell. In Pseudomonas fluorescens (strain ATCC BAA-477 / NRRL B-23932 / Pf-5), this protein is UDP-3-O-acylglucosamine N-acyltransferase.